Reading from the N-terminus, the 497-residue chain is Probable malate:quinone oxidoreductase (497 aa).

The protein belongs to the MQO family. FAD is required as a cofactor.

It catalyses the reaction (S)-malate + a quinone = a quinol + oxaloacetate. The protein operates within carbohydrate metabolism; tricarboxylic acid cycle; oxaloacetate from (S)-malate (quinone route): step 1/1. The polypeptide is Probable malate:quinone oxidoreductase (Rhodopseudomonas palustris (strain TIE-1)).